A 358-amino-acid chain; its full sequence is DNA-directed RNA polymerase subunit alpha (358 aa).

An alpha N-terminal domain (alpha-NTD) region spans residues Met1–Ser231. Residues Gln266 to Ser358 are alpha C-terminal domain (alpha-CTD).

The protein belongs to the RNA polymerase alpha chain family. As to quaternary structure, in plastids the minimal PEP RNA polymerase catalytic core is composed of four subunits: alpha, beta, beta', and beta''. When a (nuclear-encoded) sigma factor is associated with the core the holoenzyme is formed, which can initiate transcription.

Its subcellular location is the plastid. It localises to the chloroplast. It carries out the reaction RNA(n) + a ribonucleoside 5'-triphosphate = RNA(n+1) + diphosphate. Its function is as follows. DNA-dependent RNA polymerase catalyzes the transcription of DNA into RNA using the four ribonucleoside triphosphates as substrates. The chain is DNA-directed RNA polymerase subunit alpha from Chara vulgaris (Common stonewort).